The chain runs to 307 residues: Dihydroorotate dehydrogenase B (NAD(+)), catalytic subunit (307 aa).

FMN is bound by residues serine 20 and 44 to 45 (KT). Substrate contacts are provided by residues lysine 44 and 68-72 (NSIGL). Residues asparagine 98 and asparagine 126 each coordinate FMN. Asparagine 126 is a substrate binding site. Cysteine 129 serves as the catalytic Nucleophile. FMN contacts are provided by lysine 164 and isoleucine 190. 191 to 192 (NT) provides a ligand contact to substrate. Residues glycine 216, 242 to 243 (GG), and 264 to 265 (GS) contribute to the FMN site.

It belongs to the dihydroorotate dehydrogenase family. Type 1 subfamily. As to quaternary structure, heterotetramer of 2 PyrK and 2 PyrD type B subunits. Requires FMN as cofactor.

It is found in the cytoplasm. The catalysed reaction is (S)-dihydroorotate + NAD(+) = orotate + NADH + H(+). The protein operates within pyrimidine metabolism; UMP biosynthesis via de novo pathway; orotate from (S)-dihydroorotate (NAD(+) route): step 1/1. Its function is as follows. Catalyzes the conversion of dihydroorotate to orotate with NAD(+) as electron acceptor. In Carboxydothermus hydrogenoformans (strain ATCC BAA-161 / DSM 6008 / Z-2901), this protein is Dihydroorotate dehydrogenase B (NAD(+)), catalytic subunit (pyrD).